The primary structure comprises 535 residues: Alpha-1,3-mannosyl-glycoprotein 4-beta-N-acetylglucosaminyltransferase A (535 aa).

Topologically, residues 1-6 (MRLRNG) are cytoplasmic. A helical; Signal-anchor for type II membrane protein membrane pass occupies residues 7–27 (TVATALVFVTSFLTLSWYTTW). Residues 28-63 (QNGKEKLIAYQREFLALKERLRVAEHRISQRSSELN) are a coiled coil. Topologically, residues 28 to 535 (QNGKEKLIAY…NEIHIKKVTS (508 aa)) are lumenal. Residues asparagine 77 and asparagine 458 are each glycosylated (N-linked (GlcNAc...) asparagine). Position 474 is a phosphoserine (serine 474).

This sequence belongs to the glycosyltransferase 54 family. The cofactor is a divalent metal cation. N-glycosylated.

The protein localises to the golgi apparatus membrane. Its subcellular location is the secreted. It carries out the reaction N(4)-{beta-D-GlcNAc-(1-&gt;2)-alpha-D-Man-(1-&gt;3)-[beta-D-GlcNAc-(1-&gt;2)-alpha-D-Man-(1-&gt;6)]-beta-D-Man-(1-&gt;4)-beta-D-GlcNAc-(1-&gt;4)-beta-D-GlcNAc}-L-asparaginyl-[protein] + UDP-N-acetyl-alpha-D-glucosamine = N(4)-{beta-D-GlcNAc-(1-&gt;2)-[beta-D-GlcNAc-(1-&gt;4)]-alpha-D-Man-(1-&gt;3)-[beta-D-GlcNAc-(1-&gt;2)-alpha-D-Man-(1-&gt;6)]-beta-D-Man-(1-&gt;4)-beta-D-GlcNAc-(1-&gt;4)-beta-D-GlcNAc}-L-asparaginyl-[protein] + UDP + H(+). The enzyme catalyses an N(4)-{beta-D-GlcNAc-(1-&gt;2)-alpha-D-Man-(1-&gt;3)-[alpha-D-Man-(1-&gt;6)]-beta-D-Man-(1-&gt;4)-beta-D-GlcNAc-(1-&gt;4)-beta-D-GlcNAc}-L-asparaginyl-[protein] + UDP-N-acetyl-alpha-D-glucosamine = an N(4)-{beta-D-GlcNAc-(1-&gt;2)-[beta-D-GlcNAc-(1-&gt;4)]-alpha-D-Man-(1-&gt;3)-[alpha-D-Man-(1-&gt;6)]-beta-D-Man-(1-&gt;4)-beta-D-GlcNAc-(1-&gt;4)-beta-D-GlcNAc}-L-asparaginyl-[protein] + UDP + H(+). The catalysed reaction is an N(4)-{beta-D-GlcNAc-(1-&gt;2)-alpha-D-Man-(1-&gt;3)-[beta-D-GlcNAc-(1-&gt;2)-[beta-D-GlcNAc-(1-&gt;6)]-alpha-D-Man-(1-&gt;6)]-beta-D-Man-(1-&gt;4)-beta-D-GlcNAc-(1-&gt;4)-beta-D-GlcNAc}-L-asparaginyl-[protein] + UDP-N-acetyl-alpha-D-glucosamine = an N(4)-{beta-D-GlcNAc-(1-&gt;2)-[beta-D-GlcNAc-(1-&gt;4)]-alpha-D-Man-(1-&gt;3)-[beta-D-GlcNAc-(1-&gt;2)-[beta-D-GlcNAc-(1-&gt;6)]-alpha-D-Man-(1-&gt;6)]-beta-D-Man-(1-&gt;4)-beta-D-GlcNAc-(1-&gt;4)-beta-D-GlcNAc}-L-asparaginyl-[protein] + UDP + H(+). It catalyses the reaction an N(4)-{beta-D-GlcNAc-(1-&gt;2)-alpha-D-Man-(1-&gt;3)-[beta-D-GlcNAc-(1-&gt;2)-alpha-D-Man-(1-&gt;6)]-beta-D-Man-(1-&gt;4)-beta-D-GlcNAc-(1-&gt;4)-[alpha-L-Fuc-(1-&gt;6)]-beta-D-GlcNAc}-L-asparaginyl-[protein] + UDP-N-acetyl-alpha-D-glucosamine = N(4)-{beta-D-GlcNAc-(1-&gt;2)-[beta-D-GlcNAc-(1-&gt;4)]-alpha-D-Man-(1-&gt;3)-[beta-D-GlcNAc-(1-&gt;2)-alpha-D-Man-(1-&gt;6)]-beta-D-Man-(1-&gt;4)-beta-D-GlcNAc-(1-&gt;4)-[alpha-L-Fuc-(1-&gt;6)]-beta-D-GlcNAc}-asparaginyl-[protein] + UDP + H(+). It carries out the reaction an N(4)-{beta-D-GlcNAc-(1-&gt;2)-alpha-D-Man-(1-&gt;3)-[beta-D-Gal-(1-&gt;4)-beta-D-GlcNAc-(1-&gt;2)-alpha-D-Man-(1-&gt;6)]-beta-D-Man-(1-&gt;4)-beta-D-GlcNAc-(1-&gt;4)-beta-D-GlcNAc}-L-asparaginyl-[protein] + UDP-N-acetyl-alpha-D-glucosamine = an N(4)-{beta-D-GlcNAc-(1-&gt;2)-[beta-D-GlcNAc-(1-&gt;4)]-alpha-D-Man-(1-&gt;3)-[beta-D-Gal-(1-&gt;4)-beta-D-GlcNAc-(1-&gt;2)-alpha-D-Man-(1-&gt;6)]-beta-D-Man-(1-&gt;4)-beta-D-GlcNAc-(1-&gt;4)-beta-D-GlcNAc}-L-asparaginyl-[protein] + UDP + H(+). The enzyme catalyses N(4)-{beta-D-GlcNAc-(1-&gt;2)-alpha-D-Man-(1-&gt;3)-[alpha-D-Man-(1-&gt;3)-{alpha-D-Man-(1-&gt;6)}-alpha-D-Man-(1-&gt;6)]-beta-D-Man-(1-&gt;4)-beta-D-GlcNAc-(1-&gt;4)-beta-D-GlcNAc}-asparaginyl-[protein] + UDP-N-acetyl-alpha-D-glucosamine = N(4)-{beta-D-GlcNAc-(1-&gt;2)-[beta-D-GlcNAc-(1-&gt;4)]-alpha-D-Man-(1-&gt;3)-[alpha-D-Man-(1-&gt;3)-{alpha-D-Man-(1-&gt;6)}-alpha-D-Man-(1-&gt;6)]-beta-D-Man-(1-&gt;4)-beta-D-GlcNAc-(1-&gt;4)-beta-D-GlcNAc}-asparaginyl-[protein] + UDP + H(+). The catalysed reaction is N(4)-{beta-D-GlcNAc-(1-&gt;2)-alpha-D-Man-(1-&gt;3)-beta-D-Man-(1-&gt;4)-beta-D-GlcNAc-(1-&gt;4)-beta-D-GlcNAc}-asparaginyl-[protein] + UDP-N-acetyl-alpha-D-glucosamine = N(4)-{beta-D-GlcNAc-(1-&gt;2)-[beta-D-GlcNAc-(1-&gt;4)]-alpha-D-Man-(1-&gt;3)-beta-D-Man-(1-&gt;4)-beta-D-GlcNAc-(1-&gt;4)-beta-D-GlcNAc}-asparaginyl-[protein] + UDP + H(+). It participates in protein modification; protein glycosylation. With respect to regulation, inhibited by UDP. In terms of biological role, glycosyltransferase that catalyze the transfer of GlcNAc from UDP-GlcNAc to the GlcNAcbeta1-2Manalpha1-3 arm of the core structure of N-linked glycans through a beta1-4 linkage and participates in the production of tri- and tetra-antennary N-linked sugar chains. Involved in glucose transport by mediating SLC2A2/GLUT2 glycosylation, thereby controlling cell-surface expression of SLC2A2 in pancreatic beta cells. This Mus musculus (Mouse) protein is Alpha-1,3-mannosyl-glycoprotein 4-beta-N-acetylglucosaminyltransferase A.